Reading from the N-terminus, the 538-residue chain is Phosphoenolpyruvate carboxykinase (ATP) (538 aa).

Substrate-binding residues include R62, Y203, and K209. Residues K209, H228, and 244-252 (GLSGTGKTT) contribute to the ATP site. Residues K209 and H228 each contribute to the Mn(2+) site. A Mn(2+)-binding site is contributed by D265. Residues E293, R329, 445–446 (RI), and T451 contribute to the ATP site. Position 329 (R329) interacts with substrate.

It belongs to the phosphoenolpyruvate carboxykinase (ATP) family. As to quaternary structure, monomer. Mn(2+) serves as cofactor.

The protein resides in the cytoplasm. The enzyme catalyses oxaloacetate + ATP = phosphoenolpyruvate + ADP + CO2. The protein operates within carbohydrate biosynthesis; gluconeogenesis. In terms of biological role, involved in the gluconeogenesis. Catalyzes the conversion of oxaloacetate (OAA) to phosphoenolpyruvate (PEP) through direct phosphoryl transfer between the nucleoside triphosphate and OAA. In Haemophilus ducreyi (strain 35000HP / ATCC 700724), this protein is Phosphoenolpyruvate carboxykinase (ATP).